The sequence spans 313 residues: S-methyl-5'-thioadenosine phosphorylase (313 aa).

Residues Thr-20, 68 to 69, and 101 to 102 contribute to the phosphate site; these read RH and SA. Met-203 lines the substrate pocket. Ser-204 contacts phosphate. 227–229 serves as a coordination point for substrate; the sequence is DYD.

This sequence belongs to the PNP/MTAP phosphorylase family. MTAP subfamily. As to quaternary structure, homotrimer.

It localises to the cytoplasm. The protein localises to the nucleus. The enzyme catalyses S-methyl-5'-thioadenosine + phosphate = 5-(methylsulfanyl)-alpha-D-ribose 1-phosphate + adenine. Its pathway is amino-acid biosynthesis; L-methionine biosynthesis via salvage pathway; S-methyl-5-thio-alpha-D-ribose 1-phosphate from S-methyl-5'-thioadenosine (phosphorylase route): step 1/1. In terms of biological role, catalyzes the reversible phosphorylation of S-methyl-5'-thioadenosine (MTA) to adenine and 5-methylthioribose-1-phosphate. Involved in the breakdown of MTA, a major by-product of polyamine biosynthesis. Responsible for the first step in the methionine salvage pathway after MTA has been generated from S-adenosylmethionine. Has broad substrate specificity with 6-aminopurine nucleosides as preferred substrates. In Ajellomyces capsulatus (strain G186AR / H82 / ATCC MYA-2454 / RMSCC 2432) (Darling's disease fungus), this protein is S-methyl-5'-thioadenosine phosphorylase.